The following is an 824-amino-acid chain: Intraflagellar transport protein 88 homolog (824 aa).

Positions 113 to 134 are disordered; that stretch reads FDPLSQSRGPASPLEAKKKDSP. 12 TPR repeats span residues 197–230, 233–266, 272–305, 307–338, 415–448, 450–483, 484–517, 518–551, 552–585, 586–619, 620–653, and 654–687; these read YSVLFNLASQYSVNEMYAEALNTYQVIVKNKMFS, GILKMNMGNIYLKQRNYSKAIKFYRMALDQVPSV, IKIMQNIGVTFIQAGQYSDAINSYEHIMSMAPNL, AGYNLTICYFAIGDREKMKKAFQKLITVPLEI, NDLEINKAVTYLRQKDYNQAVEILKVLEKKDSRV, SAAATNLSALYYMGKDFAQASSYADIAVNSDRYN, PAALTNKGNTVFANGDYEKAAEFYKEALRNDSSC, TEALYNIGLTYEKLNRLDEALDCFLKLHAILRNS, AEVLYQIANIYELMENPSQAIEWLMQVVSVIPTD, PQVLSKLGELYDREGDKSQAFQYYYESYRYFPCN, IEVIEWLGAYYIDTQFWEKAIQYFERASLIQPTQ, and VKWQLMVASCFRRSGNYQKALDTYKDTHRKFPEN. The tract at residues 724–824 is disordered; it reads EQRIKSGRDG…EELGDDLLPE (101 aa). Residues 748–757 are compositionally biased toward polar residues; that stretch reads DSGQNYSASS. Basic and acidic residues predominate over residues 797–808; it reads ERPKTAAKKRID. Positions 809 to 824 are enriched in acidic residues; sequence EDDFADEELGDDLLPE.

In terms of assembly, component of the IFT complex B, at least composed of IFT20, IFT22, IFT25, IFT27, IFT46, IFT52, TRAF3IP1/IFT54, IFT57, IFT74, IFT80, IFT81, and IFT88. Interacts with IFT20, IFT22, IFT25, IFT27, IFT52, TRAF3IP1, IFT74, IFT80 and IFT81. Interacts with IFT172. Interacts with IFT57. Interacts with IFT46. Interacts with IFT70B. Interacts with C2CD3. Interacts with ENTR1 (via N-terminus). Interacts with LRRC56. Interacts with DZIP1. Interacts with CCDC38. Interacts with CCDC146. Interacts with CFAP53. Expressed in the heart, brain, liver, lung, kidney, skeletal muscle and pancreas.

It is found in the cytoplasm. Its subcellular location is the cytoskeleton. The protein localises to the microtubule organizing center. It localises to the centrosome. The protein resides in the centriole. It is found in the cell projection. Its subcellular location is the cilium. The protein localises to the cilium basal body. It localises to the flagellum. Functionally, positively regulates primary cilium biogenesis. Also involved in autophagy since it is required for trafficking of ATG16L and the expansion of the autophagic compartment. This is Intraflagellar transport protein 88 homolog (IFT88) from Homo sapiens (Human).